Here is a 556-residue protein sequence, read N- to C-terminus: Arginine--tRNA ligase 1 (556 aa).

The 'HIGH' region signature appears at 132–142 (ANPTGDLHLGH).

This sequence belongs to the class-I aminoacyl-tRNA synthetase family. Monomer.

The protein localises to the cytoplasm. The enzyme catalyses tRNA(Arg) + L-arginine + ATP = L-arginyl-tRNA(Arg) + AMP + diphosphate. This chain is Arginine--tRNA ligase 1, found in Bacillus anthracis.